The primary structure comprises 277 residues: Putative ankyrin repeat protein L81 (277 aa).

ANK repeat units lie at residues 150–179 (FGQTPMWIATTRCNYRNYVFLKKHGSDLHQ) and 183–215 (QGRSLLHATANAVNSECLDIFKDLIANGVDLYQ).

This is Putative ankyrin repeat protein L81 from Acanthamoeba polyphaga (Amoeba).